A 258-amino-acid polypeptide reads, in one-letter code: Pyridoxal phosphate homeostasis protein (258 aa).

N6-(pyridoxal phosphate)lysine is present on Lys-47.

It belongs to the pyridoxal phosphate-binding protein YggS/PROSC family.

Functionally, pyridoxal 5'-phosphate (PLP)-binding protein, which is involved in PLP homeostasis. In Mycobacterium bovis (strain ATCC BAA-935 / AF2122/97), this protein is Pyridoxal phosphate homeostasis protein.